A 111-amino-acid polypeptide reads, in one-letter code: Prostate and testis expressed protein 2 (111 aa).

The N-terminal stretch at 1–18 (MFVLVMICLFCQYWGVLN) is a signal peptide. The UPAR/Ly6 domain occupies 27-108 (LLCYKCKKYH…CKHSNYCNLP (82 aa)). 4 disulfide bridges follow: C29/C55, C32/C40, C47/C78, and C82/C99.

This sequence belongs to the PATE family. As to expression, expressed in prostate, testis, brain and lung.

Its subcellular location is the secreted. The chain is Prostate and testis expressed protein 2 (Pate2) from Mus musculus (Mouse).